Reading from the N-terminus, the 309-residue chain is MSNELPAVICLVGPTGAGKTAAALHLAERFAGTVINADSRQVYRDFPIITAQPTAEEQAQCPHRLYGFLETEARMSAGVWGDHATAAIDEALAQGRLPLLVGGTGMYVRALLDGIAAIPAIPRDIHVRWQERCAAEGPQRLHAMLCDIDAEYAARIHPNDRQRVTRALEVHEHTGRTFSEWHRSAMPAPRYRALRIGFAATLDALTPRLAHRIDLMLAAGALDEARRARVHCDDPSAPGWSGIGCAETYAHLVGSLDYEAMRHVWLHNTRAYAKRQLTWFRADTRLTWYAPDDVEGIALGVASFLRGGA.

13 to 20 (GPTGAGKT) contacts ATP. 15–20 (TGAGKT) is a substrate binding site. Interaction with substrate tRNA stretches follow at residues 38 to 41 (DSRQ) and 162 to 166 (QRVTR).

The protein belongs to the IPP transferase family. Monomer. Mg(2+) serves as cofactor.

It catalyses the reaction adenosine(37) in tRNA + dimethylallyl diphosphate = N(6)-dimethylallyladenosine(37) in tRNA + diphosphate. Its function is as follows. Catalyzes the transfer of a dimethylallyl group onto the adenine at position 37 in tRNAs that read codons beginning with uridine, leading to the formation of N6-(dimethylallyl)adenosine (i(6)A). The protein is tRNA dimethylallyltransferase of Nitratidesulfovibrio vulgaris (strain ATCC 29579 / DSM 644 / CCUG 34227 / NCIMB 8303 / VKM B-1760 / Hildenborough) (Desulfovibrio vulgaris).